A 433-amino-acid chain; its full sequence is uncharacterized protein (433 aa).

Positions 258 to 304 form a coiled coil; the sequence is KNIKSKLLLELRQLKNNITNLQNKITKTMDNVKKIIEEIEQSKNKVT.

Belongs to the mimivirus R160 family.

The protein resides in the virion. This is an uncharacterized protein from Acanthamoeba polyphaga mimivirus (APMV).